Here is a 106-residue protein sequence, read N- to C-terminus: Putative double-stranded DNA mimic protein VV1228 (106 aa).

It belongs to the putative dsDNA mimic protein family.

Its function is as follows. May act as a double-stranded DNA (dsDNA) mimic. Probably regulates the activity of a dsDNA-binding protein. The protein is Putative double-stranded DNA mimic protein VV1228 of Vibrio vulnificus (strain YJ016).